The sequence spans 552 residues: Tyrosine-protein kinase Src64B (552 aa).

The SH3 domain occupies 95 to 156; that stretch reads VLKRVVVALY…PLNFVAEERS (62 aa). The 98-residue stretch at 162-259 folds into the SH2 domain; that stretch reads WFFENVLRKE…GLCHILSRPC (98 aa). A Protein kinase domain is found at 284 to 537; sequence IQLLRKLGRG…TFEFLNHYFE (254 aa). Residues 290-298 and lysine 312 each bind ATP; that span reads LGRGNFGEV. Catalysis depends on aspartate 404, which acts as the Proton acceptor. Tyrosine 434 carries the post-translational modification Phosphotyrosine; by autocatalysis.

This sequence belongs to the protein kinase superfamily. Tyr protein kinase family. SRC subfamily. As to quaternary structure, interacts with hzg. Phosphorylated. After the first 8 hours of development, accumulates almost exclusively in neural tissues such as the brain, ventral nerve chord, and eye-antennal disks, and in differentiating smooth muscle.

It catalyses the reaction L-tyrosyl-[protein] + ATP = O-phospho-L-tyrosyl-[protein] + ADP + H(+). Its function is as follows. Tyrosine-protein kinase that may play a role in the development of neural tissue and smooth muscle. May contribute to tyrosine phosphorylation of Dscam1, a cell surface receptor involved in targeting of growing axons during eye morphogenesis. The polypeptide is Tyrosine-protein kinase Src64B (Src64B) (Drosophila melanogaster (Fruit fly)).